The sequence spans 228 residues: 7-cyano-7-deazaguanine synthase (228 aa).

An ATP-binding site is contributed by L7–L17. C192, C200, C203, and C206 together coordinate Zn(2+).

Belongs to the QueC family. In terms of assembly, homodimer. It depends on Zn(2+) as a cofactor.

It catalyses the reaction 7-carboxy-7-deazaguanine + NH4(+) + ATP = 7-cyano-7-deazaguanine + ADP + phosphate + H2O + H(+). Its pathway is purine metabolism; 7-cyano-7-deazaguanine biosynthesis. Functionally, catalyzes the ATP-dependent conversion of 7-carboxy-7-deazaguanine (CDG) to 7-cyano-7-deazaguanine (preQ(0)). The chain is 7-cyano-7-deazaguanine synthase from Desulforamulus reducens (strain ATCC BAA-1160 / DSM 100696 / MI-1) (Desulfotomaculum reducens).